Consider the following 326-residue polypeptide: Phospho-N-acetylmuramoyl-pentapeptide-transferase (326 aa).

Helical transmembrane passes span 2-22, 51-71, 73-93, 113-133, 143-163, 175-195, 199-219, 225-245, 250-270, and 305-325; these read ILAT…FPYF, VPPM…LLWA, LTPE…LGFI, ILIQ…YSAE, GVII…IVGS, GLAA…AYIT, MNIT…LWFN, IFMG…TSVL, MLFA…IIQI, and VIVM…ITFL.

It belongs to the glycosyltransferase 4 family. MraY subfamily. The cofactor is Mg(2+).

It is found in the cell membrane. The catalysed reaction is UDP-N-acetyl-alpha-D-muramoyl-L-alanyl-gamma-D-glutamyl-meso-2,6-diaminopimeloyl-D-alanyl-D-alanine + di-trans,octa-cis-undecaprenyl phosphate = di-trans,octa-cis-undecaprenyl diphospho-N-acetyl-alpha-D-muramoyl-L-alanyl-D-glutamyl-meso-2,6-diaminopimeloyl-D-alanyl-D-alanine + UMP. It functions in the pathway cell wall biogenesis; peptidoglycan biosynthesis. Its function is as follows. Catalyzes the initial step of the lipid cycle reactions in the biosynthesis of the cell wall peptidoglycan: transfers peptidoglycan precursor phospho-MurNAc-pentapeptide from UDP-MurNAc-pentapeptide onto the lipid carrier undecaprenyl phosphate, yielding undecaprenyl-pyrophosphoryl-MurNAc-pentapeptide, known as lipid I. This is Phospho-N-acetylmuramoyl-pentapeptide-transferase from Wolbachia pipientis wMel.